The chain runs to 414 residues: Aspartic protease-like protein pynH (414 aa).

The signal sequence occupies residues 1-19 (MFPCSRIWSLLVAAATASA). Positions 43 to 410 (FLTDIALGTP…DFEKLQVGIA (368 aa)) constitute a Peptidase A1 domain. N-linked (GlcNAc...) asparagine glycosylation is found at asparagine 93, asparagine 102, asparagine 140, asparagine 151, asparagine 173, asparagine 202, asparagine 221, asparagine 258, asparagine 272, asparagine 335, and asparagine 366. Residues cysteine 333 and cysteine 371 are joined by a disulfide bond.

This sequence belongs to the peptidase A1 family.

It functions in the pathway secondary metabolite biosynthesis. Aspartic protease-like protein; part of the gene cluster that mediates the biosynthesis of pyranonigrins, a family of antioxidative compounds. The first step of pyranonigrins biosynthesis is performed by the hybrid PKS-NRPS synthetase that condenses 6 malonyl-CoA units to an acetyl starter unit, to form a 1,3,5-trioxotetradecane-6,8-dienyl-ACP. The enoyl reductase (ER) domain of pynA is likely to be functional during the first two rounds of polyketide chain extension, to generate the saturated C-C bonds of the alkyl side chain. PynA subsequently forms the amide bond between the acyl chain and L-serine. Although pynA has a terminal reductase domain, it appears to require the thioesterase pynI for the release of the straight-chain intermediate from pynA via the formation of a tetramic acid pyranonigrin J. The methyltransferase pynC then coverts pyranonigrin J to pyranonigrin I via N-methylation. The FAD-dependent monooxygenase pynG catalyzes an epoxidation-mediated cyclization to form the dihydro-gamma-pyrone moiety, followed by pynD-catalyzed oxidation of the alcohol to the ketone and enolization to yield the characteristic tetramic acid-fused gamma-pyrone core of pyranonigrin H. Pyranonigrin H is substrate of pynH for dehydration-mediated exo-methylene formation from the serine side chain to produce pyranonigrin E, before the oxidase pynE reduces the exo-methylene of pyranonigrin E into a pendant methyl to form pyranonigrin G. The FAD-linked oxidoreductase pynB performs the reverse reaction and converts pyranonigrin G back to pyranonigrin E. This chain is Aspartic protease-like protein pynH, found in Aspergillus niger (strain ATCC MYA-4892 / CBS 513.88 / FGSC A1513).